Reading from the N-terminus, the 316-residue chain is Pantothenate kinase (316 aa).

95 to 102 provides a ligand contact to ATP; it reads GSVAVGKS.

Belongs to the prokaryotic pantothenate kinase family.

The protein localises to the cytoplasm. It catalyses the reaction (R)-pantothenate + ATP = (R)-4'-phosphopantothenate + ADP + H(+). Its pathway is cofactor biosynthesis; coenzyme A biosynthesis; CoA from (R)-pantothenate: step 1/5. In Salmonella choleraesuis (strain SC-B67), this protein is Pantothenate kinase.